The following is a 333-amino-acid chain: Probable HTH-type transcriptional repressor ExuR (333 aa).

The HTH lacI-type domain occupies 2 to 56 (VTIKDIAKLANVSHTTVSRALNNSPYIKEHTKKKILELAEQLNYTPNVNAKSLAM). Positions 4–23 (IKDIAKLANVSHTTVSRALN) form a DNA-binding region, H-T-H motif.

Its function is as follows. Transcriptional repressor for the exu locus which is required for galacturonate utilization. The chain is Probable HTH-type transcriptional repressor ExuR (exuR) from Bacillus subtilis (strain 168).